The primary structure comprises 201 residues: dITP/XTP pyrophosphatase (201 aa).

S9–K14 lines the substrate pocket. Residues E41 and D70 each coordinate Mg(2+). The active-site Proton acceptor is D70. Substrate contacts are provided by residues S71, F155–D158, K178, and H183–R184.

This sequence belongs to the HAM1 NTPase family. In terms of assembly, homodimer. Requires Mg(2+) as cofactor.

The enzyme catalyses XTP + H2O = XMP + diphosphate + H(+). It carries out the reaction dITP + H2O = dIMP + diphosphate + H(+). The catalysed reaction is ITP + H2O = IMP + diphosphate + H(+). Its function is as follows. Pyrophosphatase that catalyzes the hydrolysis of nucleoside triphosphates to their monophosphate derivatives, with a high preference for the non-canonical purine nucleotides XTP (xanthosine triphosphate), dITP (deoxyinosine triphosphate) and ITP. Seems to function as a house-cleaning enzyme that removes non-canonical purine nucleotides from the nucleotide pool, thus preventing their incorporation into DNA/RNA and avoiding chromosomal lesions. In Methylococcus capsulatus (strain ATCC 33009 / NCIMB 11132 / Bath), this protein is dITP/XTP pyrophosphatase.